We begin with the raw amino-acid sequence, 1391 residues long: Eukaryotic translation initiation factor 3 subunit A (1391 aa).

One can recognise a PCI domain in the interval 315 to 498; that stretch reads MQRMSTRVLL…RTLSFGSDLN (184 aa). 6 stretches are compositionally biased toward basic and acidic residues: residues 809 to 921, 940 to 959, 966 to 1234, 1246 to 1257, 1265 to 1307, and 1313 to 1380; these read DKEE…RGGP, AALRKDEEQVSSRAFEEKVS, EKGG…RDQT, GWREREKAREDS, QAPE…ETPR, and DSDR…IKPE. The tract at residues 809–1391 is disordered; it reads DKEEEEERLR…DEDGWTTVRR (583 aa). A run of 2 repeats spans residues 973-982 and 983-992. A 26 X 10 AA approximate tandem repeats of [DE]-[DE]-[DE]-R-[GATV]-[PS]-[KRW]-R-G-[AEFGIL] region spans residues 973–1229; the sequence is DEDRGPKRGL…DDDRGPRRGE (257 aa). A 3; approximate repeat occupies 993–1001; that stretch reads DDAGPRRGF. 20 consecutive repeat copies span residues 1002-1011, 1012-1021, 1022-1031, 1032-1041, 1042-1051, 1052-1061, 1062-1071, 1072-1081, 1082-1091, 1092-1101, 1102-1111, 1112-1120, 1122-1131, 1132-1141, 1142-1151, 1152-1161, 1162-1171, 1172-1181, 1182-1191, and 1192-1201. The stretch at 1202-1209 is one 24; approximate repeat; that stretch reads DDVPRRGA. Repeat copies occupy residues 1210–1219 and 1220–1229.

The protein belongs to the eIF-3 subunit A family. In terms of assembly, component of the eukaryotic translation initiation factor 3 (eIF-3) complex, which is composed of 13 subunits: eif3a, eif3b, eif3c, eif3d, eif3e, eif3f, eif3g, eif3h, eif3i, eif3j, eif3k, eif3l and eif3m.

It is found in the cytoplasm. RNA-binding component of the eukaryotic translation initiation factor 3 (eIF-3) complex, which is involved in protein synthesis of a specialized repertoire of mRNAs and, together with other initiation factors, stimulates binding of mRNA and methionyl-tRNAi to the 40S ribosome. The eIF-3 complex specifically targets and initiates translation of a subset of mRNAs involved in cell proliferation. In Xenopus tropicalis (Western clawed frog), this protein is Eukaryotic translation initiation factor 3 subunit A (eif3a).